Consider the following 567-residue polypeptide: Myo-inositol transporter 1 (567 aa).

Over 1–88 (MSARPAQPNI…KFVWMLVSAA (88 aa)) the chain is Cytoplasmic. The tract at residues 14 to 42 (IRTSLSGYPSPTHSGSSTPASLEFSDGRL) is disordered. Residues 16-33 (TSLSGYPSPTHSGSSTPA) are compositionally biased toward polar residues. The helical transmembrane segment at 89 to 109 (AISGLLFGYDTAAISGMLVII) threads the bilayer. Residues 110 to 123 (KDDLGTILSSWQKE) lie on the Extracellular side of the membrane. The helical transmembrane segment at 124–144 (VITSATTLGALLGGLAAGCVS) threads the bilayer. Residues 145 to 150 (DFTGRR) are Cytoplasmic-facing. A helical transmembrane segment spans residues 151–171 (LVIVFANVAFIGGSICQAACH). Residues 172–180 (TVAAMIAGR) lie on the Extracellular side of the membrane. The chain crosses the membrane as a helical span at residues 181 to 201 (FIVGLGVGLASCIVPLYIGEL). At 202–209 (APTMIRGR) the chain is on the cytoplasmic side. A helical membrane pass occupies residues 210-230 (LVTINCVAVTLGQVVAYAIGA). Residues 231–240 (SFQNVHNGWR) lie on the Extracellular side of the membrane. A helical transmembrane segment spans residues 241-261 (WIVGLGAMPSFVQLAAIGFLP). Topologically, residues 262 to 343 (ESPRILLLRS…IGCGLQAAQQ (82 aa)) are cytoplasmic. Residues 344–364 (LCGFNTLMYYSATIFAMLGFN) traverse the membrane as a helical segment. N-linked (GlcNAc...) asparagine glycosylation occurs at N365. The Extracellular segment spans residues 365 to 367 (NAT). A helical transmembrane segment spans residues 368-388 (AVGLIVATVNVLFTLVALKIV). Topologically, residues 389 to 397 (DPVGRRRTM) are cytoplasmic. The chain crosses the membrane as a helical span at residues 398–418 (LFTLPIMILALVFAAIFFYYL). Residues 419-435 (TLSTNGILIEDHDYPRS) lie on the Extracellular side of the membrane. The chain crosses the membrane as a helical span at residues 436-456 (LSILVLLSMLLYVAGYATGLG). Residues 457–476 (NIPWQQGELFRLEVRGIGTS) lie on the Cytoplasmic side of the membrane. Residues 477 to 497 (ICTAVNWSCNMLIAGTFLSLM) form a helical membrane-spanning segment. Topologically, residues 498 to 503 (DAATPS) are extracellular. A helical membrane pass occupies residues 504–524 (GAFGIYAGFCVIGWVFCWMLY). The Cytoplasmic segment spans residues 525–567 (PETSGLSLEEVYFVFEEGFGIKKSQQLRKQKLVEAAKLKAIFE).

Belongs to the major facilitator superfamily. Sugar transporter (TC 2.A.1.1) family.

Its subcellular location is the cell membrane. It carries out the reaction myo-inositol(out) + H(+)(out) = myo-inositol(in) + H(+)(in). May function as a transporter or as a sensor for myo-inositol. This Cryptococcus neoformans var. grubii serotype A (strain H99 / ATCC 208821 / CBS 10515 / FGSC 9487) (Filobasidiella neoformans var. grubii) protein is Myo-inositol transporter 1.